We begin with the raw amino-acid sequence, 162 residues long: Phosphopantetheine adenylyltransferase (162 aa).

Position 11 (S11) interacts with substrate. Residues 11 to 12 (SF) and H19 contribute to the ATP site. K43, V76, and R90 together coordinate substrate. ATP is bound by residues 91–93 (GLR), E101, and 126–132 (HLYISSS).

This sequence belongs to the bacterial CoaD family. Homohexamer. Requires Mg(2+) as cofactor.

It is found in the cytoplasm. It carries out the reaction (R)-4'-phosphopantetheine + ATP + H(+) = 3'-dephospho-CoA + diphosphate. It functions in the pathway cofactor biosynthesis; coenzyme A biosynthesis; CoA from (R)-pantothenate: step 4/5. Functionally, reversibly transfers an adenylyl group from ATP to 4'-phosphopantetheine, yielding dephospho-CoA (dPCoA) and pyrophosphate. In Streptococcus pneumoniae (strain ATCC 700669 / Spain 23F-1), this protein is Phosphopantetheine adenylyltransferase.